Consider the following 607-residue polypeptide: Bifunctional lysine-specific demethylase and histidyl-hydroxylase NO66 (607 aa).

Disordered stretches follow at residues 23 to 121 (GPTI…IKTN) and 139 to 184 (ATQH…GEVE). The segment covering 25 to 37 (TIQQTGATKTPKT) has biased composition (polar residues). The span at 39–58 (SKIRRLSIRKSTRKIKHALK) shows a compositional bias: basic residues. Over residues 156–167 (DKTPVKRVRSDT) the composition is skewed to basic and acidic residues. One can recognise a JmjC domain in the interval 188–405 (EEAEKMFEWL…DLMEKLVPAA (218 aa)). Residues His328, Asp330, and His371 each coordinate Fe cation.

The protein belongs to the ROX family. NO66 subfamily. It depends on Fe(2+) as a cofactor.

It localises to the nucleus. It carries out the reaction L-histidyl-[protein] + 2-oxoglutarate + O2 = (3S)-3-hydroxy-L-histidyl-[protein] + succinate + CO2. It catalyses the reaction N(6),N(6)-dimethyl-L-lysyl(36)-[histone H3] + 2 2-oxoglutarate + 2 O2 = L-lysyl(36)-[histone H3] + 2 formaldehyde + 2 succinate + 2 CO2. Its function is as follows. Oxygenase that can act as both a histone lysine demethylase and a ribosomal histidine hydroxylase. Specifically demethylates 'Lys-4' (H3K4me) and 'Lys-36' (H3K36me) of histone H3, thereby playing a central role in histone code. Also catalyzes the hydroxylation of 60S ribosomal protein L8. The polypeptide is Bifunctional lysine-specific demethylase and histidyl-hydroxylase NO66 (Branchiostoma floridae (Florida lancelet)).